Here is a 303-residue protein sequence, read N- to C-terminus: D-alanine--D-alanine ligase (303 aa).

The ATP-grasp domain maps to 100–295 (KQLLRRHGIL…FPALIARLIE (196 aa)). ATP is bound at residue 127 to 180 (GLGYPLFVKPNTGGSSLCLSRVTQPEGLAPALEAVFAHCGEAIVEPAIPGVEVT). Mg(2+) is bound by residues Asp-249, Glu-262, and Asn-264.

It belongs to the D-alanine--D-alanine ligase family. Mg(2+) is required as a cofactor. It depends on Mn(2+) as a cofactor.

It localises to the cytoplasm. It carries out the reaction 2 D-alanine + ATP = D-alanyl-D-alanine + ADP + phosphate + H(+). It participates in cell wall biogenesis; peptidoglycan biosynthesis. Functionally, cell wall formation. The chain is D-alanine--D-alanine ligase from Nitratidesulfovibrio vulgaris (strain DP4) (Desulfovibrio vulgaris).